A 413-amino-acid polypeptide reads, in one-letter code: Probable alpha-amylase 2 (413 aa).

Residues 74 to 75 (YL) and 191 to 196 (RFDFAR) contribute to the substrate site. Aspartate 193 functions as the Nucleophile in the catalytic mechanism. The active-site Proton donor is glutamate 218. Substrate-binding positions include tryptophan 220, serine 222, glutamine 239, aspartate 246, lysine 280, 286–288 (GWW), histidine 299, glutamine 305, lysine 386, and tryptophan 411.

The protein belongs to the glycosyl hydrolase 13 family. Ca(2+) serves as cofactor. As to expression, expressed in developing siliques.

It localises to the cytoplasm. Its subcellular location is the cytosol. It catalyses the reaction Endohydrolysis of (1-&gt;4)-alpha-D-glucosidic linkages in polysaccharides containing three or more (1-&gt;4)-alpha-linked D-glucose units.. In terms of biological role, probable alpha-amylase that does not seem to be required for breakdown of transitory starch in leaves. This is Probable alpha-amylase 2 (AMY2) from Arabidopsis thaliana (Mouse-ear cress).